The primary structure comprises 345 residues: Anthranilate phosphoribosyltransferase (345 aa).

5-phospho-alpha-D-ribose 1-diphosphate contacts are provided by residues Gly81, 84-85 (GD), Ser89, 91-94 (NVST), 109-117 (KHGNRAATS), and Ala121. Gly81 serves as a coordination point for anthranilate. Ser93 lines the Mg(2+) pocket. Asn112 contributes to the anthranilate binding site. Arg167 contacts anthranilate. 2 residues coordinate Mg(2+): Asp226 and Glu227.

Belongs to the anthranilate phosphoribosyltransferase family. Homodimer. Mg(2+) is required as a cofactor.

It catalyses the reaction N-(5-phospho-beta-D-ribosyl)anthranilate + diphosphate = 5-phospho-alpha-D-ribose 1-diphosphate + anthranilate. It participates in amino-acid biosynthesis; L-tryptophan biosynthesis; L-tryptophan from chorismate: step 2/5. Catalyzes the transfer of the phosphoribosyl group of 5-phosphorylribose-1-pyrophosphate (PRPP) to anthranilate to yield N-(5'-phosphoribosyl)-anthranilate (PRA). The polypeptide is Anthranilate phosphoribosyltransferase (Methylobacterium radiotolerans (strain ATCC 27329 / DSM 1819 / JCM 2831 / NBRC 15690 / NCIMB 10815 / 0-1)).